Consider the following 711-residue polypeptide: Acyl-CoA dehydrogenase FadE34 (711 aa).

It belongs to the acyl-CoA dehydrogenase family. Homodimer. It depends on FAD as a cofactor.

The catalysed reaction is 3-oxochol-4-en-24-oyl-CoA + A = (22E)-3-oxochola-4,22-dien-24-oyl-CoA + AH2. It catalyses the reaction 3beta-hydroxy-chol-5-ene-24-oyl-CoA + A = 3beta-hydroxy-chol-5,22-dien-24-oyl-CoA + AH2. It participates in steroid metabolism; cholesterol degradation. Its function is as follows. Involved in the second cycle of side chain dehydrogenation in the beta-oxidation of cholesterol catabolism. It contributes partly to the virulence by increasing the efficiency of beta-oxidation. Catalyzes the dehydrogenation of the five-carbon steroid side chain of 3-oxo-chol-4-en-24-oyl-CoA (3-OCO-CoA) to yield 3-oxochol-4,22-dien-24-oyl-CoA. Can also use 3beta-hydroxy-chol-5-ene-24-oyl-CoA, and shows weak activity with cholyl-CoA and deoxycholyl-CoA. This Mycobacterium tuberculosis (strain ATCC 25618 / H37Rv) protein is Acyl-CoA dehydrogenase FadE34 (fadE34).